A 231-amino-acid chain; its full sequence is MNQSDTSLIPNRAVAIFSGGMDSFTLLNELVQEGKEVFALSFNYGQRHSKELECARQVCESLNIAHKIIDITAINSLLAGSSLTDDIQVPEGHYEEENMKSTVVPNRNMILLSLAIGYAVSLKAEAVYYGAHGGDHAIYPDCRPAFVEIMSEASKLANYEPVEVRAPYLYETKIEILRRGLALGLDYGQTWTCYNGREKACGKCGSCVERLEAFDKNDATDPLAYESVCTG.

F17–L27 serves as a coordination point for ATP. Residues C193, C201, C204, and C207 each contribute to the Zn(2+) site.

It belongs to the QueC family. Zn(2+) is required as a cofactor.

It catalyses the reaction 7-carboxy-7-deazaguanine + NH4(+) + ATP = 7-cyano-7-deazaguanine + ADP + phosphate + H2O + H(+). The protein operates within purine metabolism; 7-cyano-7-deazaguanine biosynthesis. Catalyzes the ATP-dependent conversion of 7-carboxy-7-deazaguanine (CDG) to 7-cyano-7-deazaguanine (preQ(0)). This Hahella chejuensis (strain KCTC 2396) protein is 7-cyano-7-deazaguanine synthase.